A 670-amino-acid chain; its full sequence is Carnitine O-acetyltransferase, mitochondrial (670 aa).

Residue H378 is the Proton acceptor of the active site. Residues K461 and 465-472 (KRHGMSPD) each bind CoA. Y494 contacts (R)-carnitine. Position 498 (S498) interacts with CoA. A (R)-carnitine-binding site is contributed by T507. CoA is bound at residue Q597. Residues 668–670 (AKL) carry the Microbody targeting signal motif.

This sequence belongs to the carnitine/choline acetyltransferase family.

It is found in the mitochondrion inner membrane. The protein localises to the peroxisome. The catalysed reaction is (R)-carnitine + acetyl-CoA = O-acetyl-(R)-carnitine + CoA. Functionally, carnitine acetylase is specific for short chain fatty acids. Carnitine acetylase seems to affect the flux through the pyruvate dehydrogenase complex. It may be involved as well in the transport of acetyl-CoA into mitochondria. The sequence is that of Carnitine O-acetyltransferase, mitochondrial (CAT2) from Saccharomyces cerevisiae (strain ATCC 204508 / S288c) (Baker's yeast).